The primary structure comprises 218 residues: N-(5'-phosphoribosyl)anthranilate isomerase (218 aa).

Belongs to the TrpF family.

It carries out the reaction N-(5-phospho-beta-D-ribosyl)anthranilate = 1-(2-carboxyphenylamino)-1-deoxy-D-ribulose 5-phosphate. Its pathway is amino-acid biosynthesis; L-tryptophan biosynthesis; L-tryptophan from chorismate: step 3/5. In Bordetella parapertussis (strain 12822 / ATCC BAA-587 / NCTC 13253), this protein is N-(5'-phosphoribosyl)anthranilate isomerase.